A 227-amino-acid polypeptide reads, in one-letter code: Phosphoribosylformylglycinamidine synthase subunit PurQ (227 aa).

The region spanning 3–225 (FAVIVFPGSN…VKQGAHHVKT (223 aa)) is the Glutamine amidotransferase type-1 domain. Residue Cys86 is the Nucleophile of the active site. Catalysis depends on residues His194 and Glu196.

Part of the FGAM synthase complex composed of 1 PurL, 1 PurQ and 2 PurS subunits.

It localises to the cytoplasm. It catalyses the reaction N(2)-formyl-N(1)-(5-phospho-beta-D-ribosyl)glycinamide + L-glutamine + ATP + H2O = 2-formamido-N(1)-(5-O-phospho-beta-D-ribosyl)acetamidine + L-glutamate + ADP + phosphate + H(+). The enzyme catalyses L-glutamine + H2O = L-glutamate + NH4(+). It participates in purine metabolism; IMP biosynthesis via de novo pathway; 5-amino-1-(5-phospho-D-ribosyl)imidazole from N(2)-formyl-N(1)-(5-phospho-D-ribosyl)glycinamide: step 1/2. In terms of biological role, part of the phosphoribosylformylglycinamidine synthase complex involved in the purines biosynthetic pathway. Catalyzes the ATP-dependent conversion of formylglycinamide ribonucleotide (FGAR) and glutamine to yield formylglycinamidine ribonucleotide (FGAM) and glutamate. The FGAM synthase complex is composed of three subunits. PurQ produces an ammonia molecule by converting glutamine to glutamate. PurL transfers the ammonia molecule to FGAR to form FGAM in an ATP-dependent manner. PurS interacts with PurQ and PurL and is thought to assist in the transfer of the ammonia molecule from PurQ to PurL. The chain is Phosphoribosylformylglycinamidine synthase subunit PurQ from Exiguobacterium sibiricum (strain DSM 17290 / CCUG 55495 / CIP 109462 / JCM 13490 / 255-15).